The sequence spans 195 residues: Probable peroxygenase 4 (195 aa).

Positions Glu14 to Gly49 constitute an EF-hand domain. His22 is a binding site for heme. 4 residues coordinate Ca(2+): Asp27, Asn29, Asp31, and Glu38. Positions Pro70 to Pro79 match the Proline-knot motif. Ser177 carries the phosphoserine modification.

Belongs to the caleosin family. In terms of assembly, homodimer. It depends on heme b as a cofactor. Ca(2+) serves as cofactor. In terms of tissue distribution, expressed in roots, leaves, stems, shoots, flowers and germinated seeds. Barely detected in dry seeds prior to germination. Preferentially expressed in vascular bundles and in guard cells.

The protein resides in the lipid droplet. It catalyses the reaction RH + ROOH = ROH + ROH.. Calcium-binding peroxygenase involved in the degradation of storage lipid in oil bodies. May be involved in the interaction between oil bodies and vacuoles during seed germination. Acts as a negative regulator of abscisic acid responses in non-seed tissues. In Arabidopsis thaliana (Mouse-ear cress), this protein is Probable peroxygenase 4 (PXG4).